We begin with the raw amino-acid sequence, 687 residues long: MHGRKREEDPNPEETAAKALELRSLQSQFMSNHHQKIYTKEAIQLSAKLLITNPEFYTAWNYPKLAFESRLDEDSDPSLVNSIIDEELGVVQNALERNVKSYGAWYHRKWVLSKKGHYYPSLENELQLLNDYQKQAHQKQDDEKQDDPSRNFHAWNYRRFVVELTKTSEEDELQYTTDMISDISFTIYSAWHYRSVLVSSLVAKKADGFMPKETIRRELDYVHSAIFTLEEKQSGWFYYLWLLDQTVKMEIPLRFSSWPSDGSIIILSGPDCFNASSSTTKLTTFCSESGSFPLILYFDQAVSGVSSSTVTIGSELKDLVWEPVSDKKNSQVDSCVWVARLKFDCREPCFSRKETKVKVSLGGIVSSMGCNLTAPYEFVFTLRIHDTVEVELSQQESIVSWTDGFDNWDDNALSNDLNSLTALNADTGFEWRKKAIKIEIELFRTLPDSKIGKLILARLLMAEETMISNGVHYKEILQLYNDLMALDSWHNQYYKDEHSVALIHKVTSRTESMSRHLFRYRNMNNIICLRLNNLTLSRIAAVEKLLFVQMLDLSHNELHSAEGLEAMQLLCCLNLSHNRIRSFSALDSLRHLKQLRVLDVSHNHICGELPVDTTRYLCSSPLSNSGETGREVPNKYQDAYLVLRDLMKLKQLDIRGNDLIFAGEEFSSFVRQVVPKLVWLDGHKLTS.

PFTA repeat units lie at residues 38 to 72 (YTKEAIQLSAKLLITNPEFYTAWNYPKLAFESRLD), 83 to 117 (IIDEELGVVQNALERNVKSYGAWYHRKWVLSKKGH), 132 to 167 (YQKQAHQKQDDEKQDDPSRNFHAWNYRRFVVELTKT), 168 to 203 (SEEDELQYTTDMISDISFTIYSAWHYRSVLVSSLVA), and 214 to 248 (TIRRELDYVHSAIFTLEEKQSGWFYYLWLLDQTVK). 5 LRR repeats span residues 523-545 (MNNIICLRLNNLTLSRIAAVEKL), 546-567 (LFVQMLDLSHNELHSAEGLEAM), 568-591 (QLLCCLNLSHNRIRSFSALDSLRH), 592-616 (LKQLRVLDVSHNHICGELPVDTTRY), and 646-668 (LMKLKQLDIRGNDLIFAGEEFSS).

It belongs to the protein prenyltransferase subunit alpha family. As to quaternary structure, heterotrimer composed of the alpha subunit RGTA, the beta subunit RGTB and REP; within this trimer, RGTA and RGTB form the catalytic component, while REP mediates peptide substrate binding.

The catalysed reaction is geranylgeranyl diphosphate + L-cysteinyl-[protein] = S-geranylgeranyl-L-cysteinyl-[protein] + diphosphate. The enzymatic reaction requires the aid of the Rab escort protein REP. Catalyzes the transfer of a geranylgeranyl moiety from geranylgeranyl diphosphate to both cysteines of Rab proteins with the C-terminal sequence -CCXX, CXXX, -XCCX and -XCXC, such as RABA1A, RABA2A, RABF2A and RABG2. Does not seem to be a functional Rab-GGT alpha subunit in vitro. The protein is Geranylgeranyl transferase type-2 subunit alpha 2 of Arabidopsis thaliana (Mouse-ear cress).